Consider the following 361-residue polypeptide: Very-long-chain 3-oxoacyl-CoA reductase (361 aa).

Residues 32 to 52 traverse the membrane as a helical segment; the sequence is PALILSTVGAAFLLRYTLSIF. The NADP(+) site is built by valine 79, aspartate 133, asparagine 163, arginine 198, tyrosine 236, lysine 240, valine 269, and serine 271. The active-site Proton donor is the tyrosine 236. Catalysis depends on lysine 240, which acts as the Lowers pKa of active site Tyr.

It belongs to the short-chain dehydrogenases/reductases (SDR) family.

It is found in the endoplasmic reticulum membrane. It catalyses the reaction a very-long-chain (3R)-3-hydroxyacyl-CoA + NADP(+) = a very-long-chain 3-oxoacyl-CoA + NADPH + H(+). It participates in lipid metabolism; fatty acid biosynthesis. Its function is as follows. Component of the microsomal membrane bound fatty acid elongation system, which produces the 26-carbon very long-chain fatty acids (VLCFA) from palmitate. Catalyzes the reduction of the 3-ketoacyl-CoA intermediate that is formed in each cycle of fatty acid elongation. VLCFAs serve as precursors for ceramide and sphingolipids. The polypeptide is Very-long-chain 3-oxoacyl-CoA reductase (Cryptococcus neoformans var. neoformans serotype D (strain B-3501A) (Filobasidiella neoformans)).